Here is a 1911-residue protein sequence, read N- to C-terminus: Adenylate kinase 9 (1911 aa).

The segment at 31–285 (VCFVVFGKPG…LFMIVMDRLK (255 aa)) is adenylate kinase 1. 40–45 (GVGKTT) provides a ligand contact to ATP. The tract at residues 60–89 (EALPILEEQIAAETESGVMLQSMLISGQSI) is NMP 1. AMP contacts are provided by residues 87 to 89 (QSI) and 116 to 119 (EIPS). The segment at 160–205 (GQRQHNNTGYIYSRDQWDPEVIENHRKKKKEAQKDGKGEEEEEEEE) is LID 1. Residues 185-210 (RKKKKEAQKDGKGEEEEEEEEQEEEE) are disordered. The span at 197-210 (GEEEEEEEEQEEEE) shows a compositional bias: acidic residues. Arg229 is an AMP binding site. Coiled-coil stretches lie at residues 443–485 (AEAT…EFGV) and 676–711 (LQKK…TEEE). Disordered regions lie at residues 728–796 (KAKE…TEIP) and 892–926 (DYEE…KERK). A compositionally biased stretch (acidic residues) spans 733 to 750 (EETDNEDEEEIEGDELEV). The segment covering 751–761 (HEEPEASHDTR) has biased composition (basic and acidic residues). Composition is skewed to acidic residues over residues 767–791 (EEFE…ETTV) and 892–919 (DYEE…EEGE). Adenylate kinase stretches follow at residues 992–1203 (LRIC…ELIL) and 1412–1601 (IRII…KNVQ). An ATP-binding site is contributed by 1001 to 1006 (GSGKTM). The tract at residues 1021–1052 (QFEEVLQEKLLLKTEKKVGPEFEEDSENEQAA) is NMP 2. AMP contacts are provided by residues 1050–1052 (QAA) and 1079–1082 (VQLT). Positions 1124-1144 (DGFPRYPEEAQFLGDRGFFPD) are LID 2. 1421 to 1426 (KSGKTT) provides a ligand contact to ATP. The interval 1441–1472 (SIGGALRYVLNNHPETELALMLNWHLHKGMTA) is NMP 3. AMP contacts are provided by residues Arg1447, 1470 to 1472 (MTA), 1499 to 1502 (GYPV), Gln1506, and Arg1543. Residues 1536-1550 (LEKENEQRLPYPLHN) are LID 3.

It belongs to the adenylate kinase family.

Its subcellular location is the cytoplasm. The protein resides in the nucleus. The protein localises to the cell projection. It localises to the cilium. It is found in the flagellum. It carries out the reaction a ribonucleoside 5'-phosphate + ATP = a ribonucleoside 5'-diphosphate + ADP. The catalysed reaction is AMP + ATP = 2 ADP. It catalyses the reaction GTP + AMP = GDP + ADP. The enzyme catalyses CMP + ATP = CDP + ADP. It carries out the reaction GTP + CMP = CDP + GDP. The catalysed reaction is dAMP + ATP = dADP + ADP. It catalyses the reaction dCMP + ATP = dCDP + ADP. The enzyme catalyses a ribonucleoside 5'-diphosphate + ATP = a ribonucleoside 5'-triphosphate + ADP. It carries out the reaction CDP + ATP = CTP + ADP. The catalysed reaction is CDP + GTP = CTP + GDP. It catalyses the reaction GDP + ATP = GTP + ADP. The enzyme catalyses UDP + ATP = UTP + ADP. It carries out the reaction GTP + UDP = UTP + GDP. The catalysed reaction is dTDP + GTP = dTTP + GDP. It catalyses the reaction dCDP + ATP = dCTP + ADP. The enzyme catalyses dCDP + GTP = dCTP + GDP. It carries out the reaction dGDP + ATP = dGTP + ADP. The catalysed reaction is dTDP + ATP = dTTP + ADP. It catalyses the reaction dADP + GTP = dATP + GDP. Functionally, broad-specificity nucleoside phosphate kinase involved in cellular nucleotide homeostasis by catalyzing nucleoside-phosphate interconversions. Similar to other adenylate kinases, preferentially catalyzes the phosphorylation of the nucleoside monophosphate AMP with ATP as phosphate donor to produce ADP. In vitro, can also catalyze the phosphorylation of CMP, dAMP and dCMP and use GTP as an alternate phosphate donor. Moreover, exhibits a diphosphate kinase activity, producing ATP, CTP, GTP, UTP, TTP, dATP, dCTP and dGTP from the corresponding diphosphate substrates with either ATP or GTP as phosphate donors. For this activity shows the following substrate preference CDP &gt; UDP &gt; ADP &gt; TDP. This is Adenylate kinase 9 from Homo sapiens (Human).